The sequence spans 403 residues: 4-hydroxy-3-methylbut-2-en-1-yl diphosphate synthase (ferredoxin) (403 aa).

Positions 312, 315, 346, and 353 each coordinate [4Fe-4S] cluster.

The protein belongs to the IspG family. [4Fe-4S] cluster is required as a cofactor.

The enzyme catalyses (2E)-4-hydroxy-3-methylbut-2-enyl diphosphate + 2 oxidized [2Fe-2S]-[ferredoxin] + H2O = 2-C-methyl-D-erythritol 2,4-cyclic diphosphate + 2 reduced [2Fe-2S]-[ferredoxin] + H(+). It participates in isoprenoid biosynthesis; isopentenyl diphosphate biosynthesis via DXP pathway; isopentenyl diphosphate from 1-deoxy-D-xylulose 5-phosphate: step 5/6. Functionally, converts 2C-methyl-D-erythritol 2,4-cyclodiphosphate (ME-2,4cPP) into 1-hydroxy-2-methyl-2-(E)-butenyl 4-diphosphate. The protein is 4-hydroxy-3-methylbut-2-en-1-yl diphosphate synthase (ferredoxin) of Synechocystis sp. (strain ATCC 27184 / PCC 6803 / Kazusa).